Reading from the N-terminus, the 305-residue chain is Dioxygenase hkm4 (305 aa).

Fe cation contacts are provided by H140, D142, and H216.

It belongs to the PhyH family. Fe cation serves as cofactor.

Its pathway is secondary metabolite biosynthesis. Its function is as follows. Dioxygenase; part of the gene cluster that mediates the biosynthesis of hancockiamides, an unusual new family of N-cinnamoylated piperazines. The NRPS hkm10 and the NmrA-like reductase hkm9 are proposed to convert two molecules of L-Phe to the intermediary piperazine called xenocockiamide A. Xenocockiamide A is then converted to hancockiamide D via a series of hydroxylations and O-methylations. The tyrosinase hkm6 may catalyze an aromatic hydroxylation, then the 2-oxoglutarate-dependent Fe(II) dioxygenase hkm4 and the FAD-dependent phenol hydroxylase hkm7 may catalyze consecutive hydroxylations to install 2 more hydroxy groups, and the methyltransferase hkm8 probably catalyzes two methylations using 2 molecules of S-adenosyl-L-methionine (SAM). The NRPS hkm11 activates and transfers trans-cinnamate supplied by the PAL hkm12 to hancockiamide D and produces hancockiamide A. NRPS Hkm11 has the flexibility to tolerate the bulky hancockiamide G as a substrate and the absence of the acetyl-transferase hkm3 opens up the opportunity for hkm11 to introduce a second N-cinnamoyl moiety. The cytochrome P450 monooxygenase hkm5 catalyzes the methylenedioxy bridge formation, converting hancockiamide A into hancockiamide G. Hkm5 can also convert hancockiamide B into hancockiamide C, and hancockiamide D into hancockiamide H. The N-acetyltransferase hkm3 finally transfers an acetyl group to 1-N of piperazine, converting hancockiamide A into hancockiamide B and hancockiamide G into hancockiamide C. This Aspergillus hancockii protein is Dioxygenase hkm4.